The chain runs to 55 residues: Large ribosomal subunit protein bL33 (55 aa).

The protein belongs to the bacterial ribosomal protein bL33 family.

In Xanthobacter autotrophicus (strain ATCC BAA-1158 / Py2), this protein is Large ribosomal subunit protein bL33.